The chain runs to 401 residues: Chorismate synthase (401 aa).

Positions 40 and 46 each coordinate NADP(+). Residues 135–137 (RAS), 256–257 (QA), Gly302, 317–321 (KPISS), and Arg343 each bind FMN.

It belongs to the chorismate synthase family. As to quaternary structure, homotetramer. The cofactor is FMNH2.

The enzyme catalyses 5-O-(1-carboxyvinyl)-3-phosphoshikimate = chorismate + phosphate. It participates in metabolic intermediate biosynthesis; chorismate biosynthesis; chorismate from D-erythrose 4-phosphate and phosphoenolpyruvate: step 7/7. Catalyzes the anti-1,4-elimination of the C-3 phosphate and the C-6 proR hydrogen from 5-enolpyruvylshikimate-3-phosphate (EPSP) to yield chorismate, which is the branch point compound that serves as the starting substrate for the three terminal pathways of aromatic amino acid biosynthesis. This reaction introduces a second double bond into the aromatic ring system. The protein is Chorismate synthase of Saccharopolyspora erythraea (strain ATCC 11635 / DSM 40517 / JCM 4748 / NBRC 13426 / NCIMB 8594 / NRRL 2338).